Reading from the N-terminus, the 389-residue chain is GTPase Obg (389 aa).

The 159-residue stretch at 1–159 (MKFVDEAVIK…RELRLELLLL (159 aa)) folds into the Obg domain. Positions 160-333 (ADVGMLGLPN…LCYKLADFME (174 aa)) constitute an OBG-type G domain. GTP-binding positions include 166 to 173 (GLPNAGKS), 191 to 195 (FTTLI), 213 to 216 (DIPG), 283 to 286 (NKVD), and 314 to 316 (SAV). The Mg(2+) site is built by Ser173 and Thr193. Positions 359–389 (NQGEVITEDDDDDWDDWDDEEDDGHVIYVRE) are disordered. The segment covering 364–381 (ITEDDDDDWDDWDDEEDD) has biased composition (acidic residues).

It belongs to the TRAFAC class OBG-HflX-like GTPase superfamily. OBG GTPase family. In terms of assembly, monomer. The cofactor is Mg(2+).

The protein localises to the cytoplasm. Functionally, an essential GTPase which binds GTP, GDP and possibly (p)ppGpp with moderate affinity, with high nucleotide exchange rates and a fairly low GTP hydrolysis rate. Plays a role in control of the cell cycle, stress response, ribosome biogenesis and in those bacteria that undergo differentiation, in morphogenesis control. In Vibrio vulnificus (strain CMCP6), this protein is GTPase Obg.